Here is a 159-residue protein sequence, read N- to C-terminus: Endoribonuclease YbeY (159 aa).

The Zn(2+) site is built by histidine 125, histidine 129, and histidine 135.

The protein belongs to the endoribonuclease YbeY family. It depends on Zn(2+) as a cofactor.

It is found in the cytoplasm. Functionally, single strand-specific metallo-endoribonuclease involved in late-stage 70S ribosome quality control and in maturation of the 3' terminus of the 16S rRNA. This Ligilactobacillus salivarius (strain UCC118) (Lactobacillus salivarius) protein is Endoribonuclease YbeY.